The sequence spans 507 residues: Zinc finger protein Aiolos (507 aa).

A disordered region spans residues 1–85 (MEDIQPTVEL…PMGDAEESEM (85 aa)). Position 20 is a phosphothreonine (threonine 20). 2 positions are modified to phosphoserine: serine 22 and serine 42. 2 stretches are compositionally biased toward basic and acidic residues: residues 33–46 (KPHEIENVDSREAP) and 56–72 (DSMKVKDEYSDRDENIM). Residues lysine 61, lysine 73, and lysine 100 each participate in a glycyl lysine isopeptide (Lys-Gly) (interchain with G-Cter in SUMO2) cross-link. 3 C2H2-type zinc fingers span residues 117–139 (MNCDVCGLSCISFNVLMVHKRSH), 145–167 (FQCNQCGASFTQKGNLLRHIKLH), and 173–195 (FKCHLCNYACQRRDALTGHLRTH). The C2H2-type 4; atypical zinc finger occupies 201-223 (YKCEFCGRSYKQRSSLEEHKERC). Lysine 244 is covalently cross-linked (Glycyl lysine isopeptide (Lys-Gly) (interchain with G-Cter in SUMO2)). Threonine 325 is modified (phosphothreonine). The tract at residues 370–396 (LPSERGLSPNNSAQDSTDTDSNHEDRQ) is disordered. Residue serine 377 is modified to Phosphoserine. A C2H2-type 5 zinc finger spans residues 450-472 (FRCDHCHVLFLDYVMFTIHMGCH). A mediates homodimerization and heterodimerization region spans residues 450 to 502 (FRCDHCHVLFLDYVMFTIHMGCHGFRDPFECNMCGYRSHDRYEFSSHIARGEH). The C2H2-type 6; atypical zinc-finger motif lies at 478–502 (FECNMCGYRSHDRYEFSSHIARGEH).

This sequence belongs to the Ikaros C2H2-type zinc-finger protein family. In terms of assembly, homodimer. Heterodimer with other IKAROS family members. Interacts with IKZF4 and IKZF5. Interacts with HRAS. Interacts with FOXP3; this interaction may be required for silencing target genes and regulating the suppressive activity of FOXP3-positive regulatory T-cells (Treg). Interacts with BCL21L isoform Bcl-X(L); this interaction blocks the anti-apoptotic role of BCL21L. Associates with histone deacetylase complexes containing HDAC1, MTA2 and SIN3A. Interacts with IKZF1. Expression is restricted to lymphoid tissues. Expressed at highest levels in spleen and at lower levels in the thymus and bone marrow. First detected in more committed lymphoid progenitors and strongly up-regulated as these differentiate into pre-T and pre-B cell precursors.

Its subcellular location is the nucleus. The protein localises to the cytoplasm. In terms of biological role, transcription factor that plays an important role in the regulation of lymphocyte differentiation. Binds to GGGAA. Plays an essential role in regulation of B-cell differentiation, proliferation and maturation to an effector state. Involved in regulating BCL2 expression and controlling apoptosis in T-cells in an IL2-dependent manner. The chain is Zinc finger protein Aiolos (Ikzf3) from Mus musculus (Mouse).